The sequence spans 227 residues: MAYPFQLGFQDATSPIMEELLHFHDHTLMIVFLISSLVLYIITLMLTTKLTHTSTMDAQEVETVWTILPAIILILIALPSLRILYMMDEVNNPSLTVKTMGHQWYWSYEYTDYEDLSFDSYMIPTSDLKPGELRLLEVDNRVILPMEMTIRMLVSSEDVLHSWAVPSLGLKTDAIPGRLNQTTLMSTRPGLFYGQCSEICGSNHSFMPIVLELVPLEIFEKWSASML.

The Mitochondrial intermembrane portion of the chain corresponds to 1-14 (MAYPFQLGFQDATS). Residues 15 to 45 (PIMEELLHFHDHTLMIVFLISSLVLYIITLM) traverse the membrane as a helical segment. Topologically, residues 46–59 (LTTKLTHTSTMDAQ) are mitochondrial matrix. Residues 60–87 (EVETVWTILPAIILILIALPSLRILYMM) form a helical membrane-spanning segment. Residues 88 to 227 (DEVNNPSLTV…IFEKWSASML (140 aa)) are Mitochondrial intermembrane-facing. Cu cation-binding residues include His-161, Cys-196, Glu-198, Cys-200, His-204, and Met-207. Glu-198 provides a ligand contact to Mg(2+).

This sequence belongs to the cytochrome c oxidase subunit 2 family. As to quaternary structure, component of the cytochrome c oxidase (complex IV, CIV), a multisubunit enzyme composed of 14 subunits. The complex is composed of a catalytic core of 3 subunits MT-CO1, MT-CO2 and MT-CO3, encoded in the mitochondrial DNA, and 11 supernumerary subunits COX4I, COX5A, COX5B, COX6A, COX6B, COX6C, COX7A, COX7B, COX7C, COX8 and NDUFA4, which are encoded in the nuclear genome. The complex exists as a monomer or a dimer and forms supercomplexes (SCs) in the inner mitochondrial membrane with NADH-ubiquinone oxidoreductase (complex I, CI) and ubiquinol-cytochrome c oxidoreductase (cytochrome b-c1 complex, complex III, CIII), resulting in different assemblies (supercomplex SCI(1)III(2)IV(1) and megacomplex MCI(2)III(2)IV(2)). Found in a complex with TMEM177, COA6, COX18, COX20, SCO1 and SCO2. Interacts with TMEM177 in a COX20-dependent manner. Interacts with COX20. Interacts with COX16. It depends on Cu cation as a cofactor.

The protein resides in the mitochondrion inner membrane. The catalysed reaction is 4 Fe(II)-[cytochrome c] + O2 + 8 H(+)(in) = 4 Fe(III)-[cytochrome c] + 2 H2O + 4 H(+)(out). In terms of biological role, component of the cytochrome c oxidase, the last enzyme in the mitochondrial electron transport chain which drives oxidative phosphorylation. The respiratory chain contains 3 multisubunit complexes succinate dehydrogenase (complex II, CII), ubiquinol-cytochrome c oxidoreductase (cytochrome b-c1 complex, complex III, CIII) and cytochrome c oxidase (complex IV, CIV), that cooperate to transfer electrons derived from NADH and succinate to molecular oxygen, creating an electrochemical gradient over the inner membrane that drives transmembrane transport and the ATP synthase. Cytochrome c oxidase is the component of the respiratory chain that catalyzes the reduction of oxygen to water. Electrons originating from reduced cytochrome c in the intermembrane space (IMS) are transferred via the dinuclear copper A center (CU(A)) of subunit 2 and heme A of subunit 1 to the active site in subunit 1, a binuclear center (BNC) formed by heme A3 and copper B (CU(B)). The BNC reduces molecular oxygen to 2 water molecules using 4 electrons from cytochrome c in the IMS and 4 protons from the mitochondrial matrix. This chain is Cytochrome c oxidase subunit 2 (MT-CO2), found in Balaenoptera borealis (Sei whale).